The following is a 491-amino-acid chain: MDSVSTAILLLLLALICLLLTLSSRDKGKLPPGPRPLPLLGNLLLLRSQDMLTSLTKLSKEYGSMYTVHLGPRRVVVLSGYQAVKEALVDQGEEFSGRRDFPAFFNFTKGNGIAFSNGDRWKVLRRFSIQILRNFGMGKRSIEERILEEGSFLLAELRKTEGEPFDPTFVLSRSVSNIICSVLFGSRFDYDDERLLTIIRHINDNFQIMSSPWGELYDIFPSLLDWVPGPHQRIFQNFKCLRDLIAHSVHDHQASLDPRSPRDFIDCFLTKMAEENEDPLSHFHMDTLLMTTHNLLFGGTETVGTTLRYAFLALMKYPKVQARVQEEIDLVVGRARLPALKDRAAMPYTDAVIHEVQRFADIIPMSLPHRVTRDTAFRGFLIPKGTDIITLLNTVHYDPSQFLTPQEFNPEHFLDANQSFKKSPAFMPFSAGRRLCLGESLARMELFLYLTAILQSFSLQPLGAPKDIDLTPLSSGLGNLPRPFQLCLRPR.

Cys-436 lines the heme pocket.

Belongs to the cytochrome P450 family. Requires heme as cofactor.

It is found in the endoplasmic reticulum membrane. It localises to the microsome membrane. It catalyses the reaction an organic molecule + reduced [NADPH--hemoprotein reductase] + O2 = an alcohol + oxidized [NADPH--hemoprotein reductase] + H2O + H(+). Cytochromes P450 are a group of heme-thiolate monooxygenases. In liver microsomes, this enzyme is involved in an NADPH-dependent electron transport pathway. It oxidizes a variety of structurally unrelated compounds, including steroids, fatty acids, and xenobiotics. The sequence is that of Cytochrome P450 2F5 (CYP2F5) from Gorilla gorilla gorilla (Western lowland gorilla).